A 412-amino-acid polypeptide reads, in one-letter code: Acetylornithine aminotransferase (412 aa).

Residues 109–110 (GA) and Phe142 each bind pyridoxal 5'-phosphate. Position 145 (Arg145) interacts with N(2)-acetyl-L-ornithine. 233–236 (DEVQ) is a binding site for pyridoxal 5'-phosphate. Residue Lys262 is modified to N6-(pyridoxal phosphate)lysine. Position 289 (Ser289) interacts with N(2)-acetyl-L-ornithine. Thr290 is a binding site for pyridoxal 5'-phosphate.

It belongs to the class-III pyridoxal-phosphate-dependent aminotransferase family. ArgD subfamily. Homodimer. Requires pyridoxal 5'-phosphate as cofactor.

Its subcellular location is the cytoplasm. It catalyses the reaction N(2)-acetyl-L-ornithine + 2-oxoglutarate = N-acetyl-L-glutamate 5-semialdehyde + L-glutamate. It functions in the pathway amino-acid biosynthesis; L-arginine biosynthesis; N(2)-acetyl-L-ornithine from L-glutamate: step 4/4. This is Acetylornithine aminotransferase from Thermosynechococcus vestitus (strain NIES-2133 / IAM M-273 / BP-1).